Here is a 239-residue protein sequence, read N- to C-terminus: MKNDVISPEFDENGRPLRRIRSFVRRQGRLTKGQEHALENYWPVMGVEFSEAPVDFATLFGREAPVTLEIGFGMGASLVAMAKARPEQNFLGIEVHSPGVGACLASAHEEGVENLHVMCHDAVEVLHKMIPDNSLSMVQLFFPDPWHKARHNKRRIVQVPFAELVLSKLKLGGVFHMATDWEAYAEHMLEVMSSIDGYKNLSESNDYVPRPESRPVTKFEQRGHRLGHGVWDLMFERVK.

S-adenosyl-L-methionine is bound by residues Glu-69, Glu-94, Asp-121, and Asp-144. Residue Asp-144 is part of the active site. A substrate-binding site is contributed by Lys-148. The interval 150–155 is interaction with RNA; sequence RHNKRR. Substrate-binding positions include Asp-180 and 217 to 220; that span reads TKFE.

Belongs to the class I-like SAM-binding methyltransferase superfamily. TrmB family. In terms of assembly, monomer.

It catalyses the reaction guanosine(46) in tRNA + S-adenosyl-L-methionine = N(7)-methylguanosine(46) in tRNA + S-adenosyl-L-homocysteine. Its pathway is tRNA modification; N(7)-methylguanine-tRNA biosynthesis. Catalyzes the formation of N(7)-methylguanine at position 46 (m7G46) in tRNA. The sequence is that of tRNA (guanine-N(7)-)-methyltransferase from Salmonella typhi.